Reading from the N-terminus, the 344-residue chain is Ras association domain-containing protein 1 (344 aa).

Residue serine 2 is modified to N-acetylserine. The residue at position 2 (serine 2) is a Phosphoserine. Residues 2 to 119 (SGEPELIELR…DLGWEPAVER (118 aa)) are mediates interaction with E4F1. Position 36 is an omega-N-methylarginine (arginine 36). The Phorbol-ester/DAG-type zinc finger occupies 51-105 (GHRFQPAGPATHTWCDLCGDFIWGVVRKGLQCARLSADCKFTCHYRCRALVCLDC). Residues 179–189 (SVPSSKKPPSL) show a composition bias toward low complexity. The disordered stretch occupies residues 179–203 (SVPSSKKPPSLQDARRGPGRGTSVR). Positions 198-292 (RGTSVRRRTS…LSFVLKENDS (95 aa)) constitute a Ras-associating domain. One can recognise an SARAH domain in the interval 294 to 341 (EVNWDAFSMPELHNFLRILQREEEEHLRQILQKYSYCRQKIQEALHAC). Positions 315–318 (EEEE) are MOAP1-binding.

In terms of assembly, interacts with MAP1S. Interacts with XPA. Binds to the N-terminal of CDC20 during prometaphase. Binds to STK3/MST2 and STK4/MST1. Recruited to the TNFRSF1A and TNFRSF10A complexes in response to their respective cognate ligand, after internalization. Can self-associate. Part of a complex with MDM2, DAXX, RASSF1 and USP7. Interacts with ECM2. Interacts with MOAP1. Interacts with E4F1. Interacts with RSSF5 and probably associates with HRAS via a RSSF1 isoform A-RSSF5 heterodimer. Interacts (via C-terminus) with DAXX (via N-terminus); the interaction is independent of MDM2 and TP53. Interacts (via N-terminus) with MDM2 (via C-terminus); the interaction is independent of TP53. Interacts with RAB39A. Interacts with RAB39B; the interaction is weak. As to quaternary structure, interacts (via N-terminus) with DAXX. Interacts with RAB39B; the interaction is strong. Does not interact with RAB39A. In terms of assembly, interacts (via N-terminus) with DAXX. Isoform A and isoform C are ubiquitously expressed in all tissues tested, however isoform A is absent in many corresponding cancer cell lines. Isoform B is mainly expressed in hematopoietic cells.

The protein localises to the cytoplasm. It is found in the cytoskeleton. It localises to the microtubule organizing center. The protein resides in the centrosome. Its subcellular location is the spindle. The protein localises to the spindle pole. It is found in the nucleus. Its function is as follows. Potential tumor suppressor. Required for death receptor-dependent apoptosis. Mediates activation of STK3/MST2 and STK4/MST1 during Fas-induced apoptosis by preventing their dephosphorylation. When associated with MOAP1, promotes BAX conformational change and translocation to mitochondrial membranes in response to TNF and TNFSF10 stimulation. Isoform A interacts with CDC20, an activator of the anaphase-promoting complex, APC, resulting in the inhibition of APC activity and mitotic progression. Inhibits proliferation by negatively regulating cell cycle progression at the level of G1/S-phase transition by regulating accumulation of cyclin D1 protein. Isoform C has been shown not to perform these roles, no function has been identified for this isoform. Isoform A disrupts interactions among MDM2, DAXX and USP7, thus contributing to the efficient activation of TP53 by promoting MDM2 self-ubiquitination in cell-cycle checkpoint control in response to DNA damage. The protein is Ras association domain-containing protein 1 of Homo sapiens (Human).